The chain runs to 524 residues: Probable plastidic glucose transporter 1 (524 aa).

The next 12 helical transmembrane spans lie at 88 to 108 (MANFLFGYHIGVMNGPIVSIA), 122 to 142 (LVVSIFIAGAFIGSIVAGPLV), 151 to 171 (FQIFTIPLILGALVSAQAHSL), 179 to 199 (FLVGLGIGVNTVLVPIYISEV), 208 to 228 (LGTLCQIGTCLGIIFSLLLGI), 239 to 259 (TMLYVASMPGFLLALGMQFAV), 320 to 340 (VAFIGGSLFVLQQFAGINGVL), 357 to 377 (QASLYVGVTNFAGALCASYLI), 386 to 406 (LIGSYLGMAVSMFLIVYAVGF), 420 to 440 (GTLMYIFSFAIGAGPVTGLII), 452 to 472 (IMGFSFSVHWVSNFLVGLFFL), and 483 to 503 (VYASFGSVSLLAAAFSHLFTV).

Belongs to the major facilitator superfamily. Sugar transporter (TC 2.A.1.1) family.

It localises to the plastid. It is found in the chloroplast membrane. In terms of biological role, may be involved in the efflux of glucose towards the cytosol. The protein is Probable plastidic glucose transporter 1 of Arabidopsis thaliana (Mouse-ear cress).